The sequence spans 125 residues: Small ribosomal subunit protein uS12 (125 aa).

The tract at residues 1 to 26 (MPTINQLVRKSRKTVKAQSDSPALKN) is disordered. Aspartate 89 carries the 3-methylthioaspartic acid modification.

The protein belongs to the universal ribosomal protein uS12 family. Part of the 30S ribosomal subunit. Contacts proteins S8 and S17. May interact with IF1 in the 30S initiation complex.

Functionally, with S4 and S5 plays an important role in translational accuracy. In terms of biological role, interacts with and stabilizes bases of the 16S rRNA that are involved in tRNA selection in the A site and with the mRNA backbone. Located at the interface of the 30S and 50S subunits, it traverses the body of the 30S subunit contacting proteins on the other side and probably holding the rRNA structure together. The combined cluster of proteins S8, S12 and S17 appears to hold together the shoulder and platform of the 30S subunit. The sequence is that of Small ribosomal subunit protein uS12 from Clostridium tetani (strain Massachusetts / E88).